A 253-amino-acid polypeptide reads, in one-letter code: 2-dehydro-3-deoxy-D-gluconate 5-dehydrogenase (253 aa).

14-38 (LITGCDTGLGQGMAVGLAEAGCDIV) provides a ligand contact to NAD(+). Serine 145 contacts substrate. The active-site Proton acceptor is tyrosine 158.

The protein belongs to the short-chain dehydrogenases/reductases (SDR) family.

The enzyme catalyses 2-dehydro-3-deoxy-D-gluconate + NAD(+) = 3-deoxy-D-glycero-2,5-hexodiulosonate + NADH + H(+). Its pathway is glycan metabolism; pectin degradation; 2-dehydro-3-deoxy-D-gluconate from pectin: step 5/5. Its function is as follows. Catalyzes the reduction of 2,5-diketo-3-deoxygluconate (DKII or 4,6-dihydroxy-2,5-dioxohexanoate) into 2-keto-3-deoxygluconate (KDG or 2-dehydro-3-deoxygluconate) with a concomitant oxidation of NADH. In Dickeya dadantii (strain 3937) (Erwinia chrysanthemi (strain 3937)), this protein is 2-dehydro-3-deoxy-D-gluconate 5-dehydrogenase (kduD).